Here is a 678-residue protein sequence, read N- to C-terminus: Dol-P-Man:Man(7)GlcNAc(2)-PP-Dol alpha-1,6-mannosyltransferase (678 aa).

11 helical membrane passes run 1–21 (MDILIFVTAAAHLVYTPFTKV), 56–76 (FIGPLVVSIISAPFVLLFETL), 81–101 (FWAQYVVRLVLAGAISVAWNS), 109–129 (IYGVEVRLWFTAITITQFHFM), 133–153 (TRPLPNIFALPIVLFAIAYWL), 168–188 (ILVFRSELALFLGILLVVSLL), 200–220 (VALPAGVCILAATVLVDSFFW), 252–272 (FYSALPRAMGASLVLVPIGVA), 279–299 (PLVLSALLFVLLYSILPHKEL), 301–321 (FIIYVFPVLNIAAACACQRIW), and 334–354 (ALACGAHLLLNVFITLFLLVI).

The protein belongs to the glycosyltransferase 22 family.

The protein localises to the endoplasmic reticulum membrane. The enzyme catalyses an alpha-D-Man-(1-&gt;2)-alpha-D-Man-(1-&gt;2)-alpha-D-Man-(1-&gt;3)-[alpha-D-Man-(1-&gt;2)-alpha-D-Man-(1-&gt;3)-alpha-D-Man-(1-&gt;6)]-beta-D-Man-(1-&gt;4)-beta-D-GlcNAc-(1-&gt;4)-alpha-D-GlcNAc-diphospho-di-trans,poly-cis-dolichol + a di-trans,poly-cis-dolichyl beta-D-mannosyl phosphate = an alpha-D-Man-(1-&gt;2)-alpha-D-Man-(1-&gt;2)-alpha-D-Man-(1-&gt;3)-[alpha-D-Man-(1-&gt;2)-alpha-D-Man-(1-&gt;3)-[alpha-D-Man-(1-&gt;6)]-alpha-D-Man-(1-&gt;6)]-beta-D-Man-(1-&gt;4)-beta-D-GlcNAc-(1-&gt;4)-alpha-D-GlcNAc-diphospho-di-trans,poly-cis-dolichol + a di-trans,poly-cis-dolichyl phosphate + H(+). It participates in protein modification; protein glycosylation. In terms of biological role, mannosyltransferase that operates in the biosynthetic pathway of dolichol-linked oligosaccharides, the glycan precursors employed in protein asparagine (N)-glycosylation. The assembly of dolichol-linked oligosaccharides begins on the cytosolic side of the endoplasmic reticulum membrane and finishes in its lumen. The sequential addition of sugars to dolichol pyrophosphate produces dolichol-linked oligosaccharides containing fourteen sugars, including two GlcNAcs, nine mannoses and three glucoses. Once assembled, the oligosaccharide is transferred from the lipid to nascent proteins by oligosaccharyltransferases. In the lumen of the endoplasmic reticulum, adds the eighth mannose residue in an alpha-1,6 linkage onto Man(7)GlcNAc(2)-PP-dolichol to produce Man(8)GlcNAc(2)-PP-dolichol. This is Dol-P-Man:Man(7)GlcNAc(2)-PP-Dol alpha-1,6-mannosyltransferase from Drosophila melanogaster (Fruit fly).